Consider the following 367-residue polypeptide: MNMSNKRNQQPSYIADHFSSLDQVITSLREAGLESSNLILGIDFTKSNEWTGRYSFNRKSLHAIGKRQNPYEKAISIIGRTLSPFDEDDLIPCFGFGDVTTRDQYVFSFYPENKSCDGLENAVKRYREIVPHLKLSGPTSFAPVIDAAINIVEQNNMQYHVLVIIADGQVTRNPDVPLGRLSPQEEATMNSIMAASHYPLSIVLVGVGDGPWDTMKQFDDNIPHREFDNFQFVNFTKIMSEHKDAAKKEAAFALAALMEIPFQYKATLSLNRKPVRSSHQHHKPLPPPPEVIERDNAVRSVPNQMTETAEKSDRLAPSTVPVCPICLTNPKDMAFSCGHTTCKECGVVITTCPLCRQPITTRIRLYT.

The VWFA domain occupies 37 to 257 (NLILGIDFTK…KEAAFALAAL (221 aa)). The RING-type zinc finger occupies 323-356 (CPICLTNPKDMAFSCGHTTCKECGVVITTCPLCR).

As to quaternary structure, interacts with UBC30, GRXS17 and GLB3. Binds to and coactivates GAF1/IDD2 and ENY/IDD1. As to expression, widely expressed.

The protein resides in the cytoplasm. It localises to the nucleus. The catalysed reaction is S-ubiquitinyl-[E2 ubiquitin-conjugating enzyme]-L-cysteine + [acceptor protein]-L-lysine = [E2 ubiquitin-conjugating enzyme]-L-cysteine + N(6)-ubiquitinyl-[acceptor protein]-L-lysine.. Possesses E3 ubiquitin-protein ligase in vitro. Acts as upstream modulator of jasmonate (JA) signaling in response to various stimuli, such as JA-inhibited root growth, JA-inductive gene expression, coronatine-mediated pathogen susceptibility, wound-stimulated expression of JA-responsive genes and wound-induced JA biosynthesis. Controls fumonisin B1 (FB1)-triggered programmed cell death (PCD) by modulating the JA signaling pathway. May mediate salicylic acid (SA) suppression of JA signaling in FB1-induced responses. May mediate the formation of 'Lys-48'-linked multiubiquitin chains. Mediates the polyubiquitination and subsequent proteasomal degradation of the target protein GRXS17. In Arabidopsis thaliana (Mouse-ear cress), this protein is E3 ubiquitin-protein ligase RGLG3.